The chain runs to 292 residues: Cyclic dipurine nucleotide synthase (292 aa).

Gln-47 is a binding site for ATP. GTP is bound at residue 48 to 52 (GSYRN). 2 residues coordinate Mg(2+): Asp-61 and Asp-63. Residues Asp-63, 121–122 (NK), and Asp-136 each bind ATP. Asp-136 is a Mg(2+) binding site. Lys-197 and Ser-216 together coordinate GTP.

This sequence belongs to the CD-NTase family. E01 subfamily. Mg(2+) serves as cofactor.

It carries out the reaction 2 ATP = 3',3'-c-di-AMP + 2 diphosphate. The enzyme catalyses 2 GTP = 3',3'-c-di-GMP + 2 diphosphate. It catalyses the reaction GTP + ATP = 3',3'-cGAMP + 2 diphosphate. In terms of biological role, cyclic nucleotide synthase (second messenger synthase) of a CBASS antivirus system. CBASS (cyclic oligonucleotide-based antiphage signaling system) provides immunity against bacteriophage. The CD-NTase protein synthesizes cyclic nucleotides in response to infection; these serve as specific second messenger signals. The signals activate a diverse range of effectors, leading to bacterial cell death and thus abortive phage infection. A type I-A(GA) CBASS system. Its function is as follows. Cyclic dinucleotide synthase that catalyzes the synthesis of 3'3'-cyclic GMP-AMP (cGAMP) from GTP and ATP, and of c-di-AMP and c-di-GMP, that are second messengers for cell signal transduction. The polypeptide is Cyclic dipurine nucleotide synthase (Elizabethkingia meningoseptica (Chryseobacterium meningosepticum)).